The following is a 313-amino-acid chain: Dihydroorotate dehydrogenase B (NAD(+)), catalytic subunit (313 aa).

Residues serine 21 and 45–46 (KA) each bind FMN. Substrate contacts are provided by residues lysine 45 and 69 to 73 (NAIGL). 2 residues coordinate FMN: asparagine 99 and asparagine 127. Asparagine 127 lines the substrate pocket. Residue cysteine 130 is the Nucleophile of the active site. FMN is bound by residues lysine 165 and isoleucine 191. Residue 192 to 193 (NT) participates in substrate binding. FMN is bound by residues glycine 217, 243–244 (GG), and 265–266 (GT).

The protein belongs to the dihydroorotate dehydrogenase family. Type 1 subfamily. As to quaternary structure, heterotetramer of 2 PyrK and 2 PyrD type B subunits. FMN serves as cofactor.

The protein resides in the cytoplasm. It carries out the reaction (S)-dihydroorotate + NAD(+) = orotate + NADH + H(+). The protein operates within pyrimidine metabolism; UMP biosynthesis via de novo pathway; orotate from (S)-dihydroorotate (NAD(+) route): step 1/1. Functionally, catalyzes the conversion of dihydroorotate to orotate with NAD(+) as electron acceptor. The protein is Dihydroorotate dehydrogenase B (NAD(+)), catalytic subunit (pyrD) of Geobacillus kaustophilus (strain HTA426).